The chain runs to 294 residues: Pyridoxal 5'-phosphate synthase subunit PdxS (294 aa).

Asp24 contributes to the D-ribose 5-phosphate binding site. Catalysis depends on Lys81, which acts as the Schiff-base intermediate with D-ribose 5-phosphate. Gly153 lines the D-ribose 5-phosphate pocket. Residue Arg165 coordinates D-glyceraldehyde 3-phosphate. Residues Gly214 and 235–236 (GS) each bind D-ribose 5-phosphate.

The protein belongs to the PdxS/SNZ family. In terms of assembly, in the presence of PdxT, forms a dodecamer of heterodimers.

The catalysed reaction is aldehydo-D-ribose 5-phosphate + D-glyceraldehyde 3-phosphate + L-glutamine = pyridoxal 5'-phosphate + L-glutamate + phosphate + 3 H2O + H(+). It functions in the pathway cofactor biosynthesis; pyridoxal 5'-phosphate biosynthesis. In terms of biological role, catalyzes the formation of pyridoxal 5'-phosphate from ribose 5-phosphate (RBP), glyceraldehyde 3-phosphate (G3P) and ammonia. The ammonia is provided by the PdxT subunit. Can also use ribulose 5-phosphate and dihydroxyacetone phosphate as substrates, resulting from enzyme-catalyzed isomerization of RBP and G3P, respectively. In Bacillus licheniformis (strain ATCC 14580 / DSM 13 / JCM 2505 / CCUG 7422 / NBRC 12200 / NCIMB 9375 / NCTC 10341 / NRRL NRS-1264 / Gibson 46), this protein is Pyridoxal 5'-phosphate synthase subunit PdxS.